A 249-amino-acid polypeptide reads, in one-letter code: Probable transcriptional regulatory protein LBL_2537 (249 aa).

It belongs to the TACO1 family.

The protein localises to the cytoplasm. The sequence is that of Probable transcriptional regulatory protein LBL_2537 from Leptospira borgpetersenii serovar Hardjo-bovis (strain L550).